A 202-amino-acid polypeptide reads, in one-letter code: ATP-dependent Clp protease proteolytic subunit 1 (202 aa).

The active-site Nucleophile is Ser101. Residue His126 is part of the active site.

It belongs to the peptidase S14 family. Fourteen ClpP subunits assemble into 2 heptameric rings which stack back to back to give a disk-like structure with a central cavity, resembling the structure of eukaryotic proteasomes.

The protein resides in the cytoplasm. It catalyses the reaction Hydrolysis of proteins to small peptides in the presence of ATP and magnesium. alpha-casein is the usual test substrate. In the absence of ATP, only oligopeptides shorter than five residues are hydrolyzed (such as succinyl-Leu-Tyr-|-NHMec, and Leu-Tyr-Leu-|-Tyr-Trp, in which cleavage of the -Tyr-|-Leu- and -Tyr-|-Trp bonds also occurs).. Cleaves peptides in various proteins in a process that requires ATP hydrolysis. Has a chymotrypsin-like activity. Plays a major role in the degradation of misfolded proteins. This is ATP-dependent Clp protease proteolytic subunit 1 from Rhizobium etli (strain ATCC 51251 / DSM 11541 / JCM 21823 / NBRC 15573 / CFN 42).